The chain runs to 240 residues: UDP-2,3-diacylglucosamine hydrolase (240 aa).

Residues Asp-8, His-10, Asp-41, Asn-79, and His-114 each coordinate Mn(2+). 79–80 contacts substrate; the sequence is NR. The substrate site is built by Asp-122, Ser-160, Asn-164, Lys-167, and His-195. Mn(2+) contacts are provided by His-195 and His-197.

This sequence belongs to the LpxH family. The cofactor is Mn(2+).

It is found in the cell inner membrane. The enzyme catalyses UDP-2-N,3-O-bis[(3R)-3-hydroxytetradecanoyl]-alpha-D-glucosamine + H2O = 2-N,3-O-bis[(3R)-3-hydroxytetradecanoyl]-alpha-D-glucosaminyl 1-phosphate + UMP + 2 H(+). Its pathway is glycolipid biosynthesis; lipid IV(A) biosynthesis; lipid IV(A) from (3R)-3-hydroxytetradecanoyl-[acyl-carrier-protein] and UDP-N-acetyl-alpha-D-glucosamine: step 4/6. Its function is as follows. Hydrolyzes the pyrophosphate bond of UDP-2,3-diacylglucosamine to yield 2,3-diacylglucosamine 1-phosphate (lipid X) and UMP by catalyzing the attack of water at the alpha-P atom. Involved in the biosynthesis of lipid A, a phosphorylated glycolipid that anchors the lipopolysaccharide to the outer membrane of the cell. This Escherichia coli O7:K1 (strain IAI39 / ExPEC) protein is UDP-2,3-diacylglucosamine hydrolase.